The primary structure comprises 416 residues: Putative competence-damage inducible protein (416 aa).

It belongs to the CinA family.

The polypeptide is Putative competence-damage inducible protein (Bacillus pumilus (strain SAFR-032)).